A 375-amino-acid polypeptide reads, in one-letter code: MEECSCDNRFRRGNNEPAGFSLDEQWWAGNIRLVDLSGQLLGAHIAHAGLIAFWAGSITVLEVARYVPDVPFYEQGLGLLPHLATLGFGIGPDGTVVDTYPYFVIGILHLVTSAVLGAGGLFHTFKGPAILAEGGALAPKFHYDWGDTKQLSLILGHHLLLLGILCLAFVAKAMFWGGVYDASLGTVHTVSPNLNPADIFGYVFGFNHGQFNGLGMSSVDNLPDIIGGHVYIGILELIGGTWHILTKPFAIGAKPFSFSGEAILSYSLGAVGWMGLLSGFFVRYCDAAYPPQFYGPERSGAAAVQYILGVLLLVGHVWHATRARAGGEPVPYTPPAPQRGRFGMTRVAPAPARTFIGRGKPQPEPPKKKGLFGRG.

The next 6 helical transmembrane spans lie at 40-60 (LLGAHIAHAGLIAFWAGSITV), 102-122 (YFVIGILHLVTSAVLGAGGLF), 151-171 (LSLILGHHLLLLGILCLAFVA), 225-245 (IIGGHVYIGILELIGGTWHIL), 262-282 (AILSYSLGAVGWMGLLSGFFV), and 300-320 (GAAAVQYILGVLLLVGHVWHA). Positions 352–375 (ARTFIGRGKPQPEPPKKKGLFGRG) are disordered.

It belongs to the PsbB/PsbC family. IsiA/Pcb subfamily. The antenna complex consists of chlorophylls (a and b) and chlorophyll a/b binding proteins. It depends on chlorophyll a as a cofactor. Chlorophyll b is required as a cofactor.

It is found in the cellular thylakoid membrane. In terms of biological role, the antenna complex functions as a light receptor, it captures and delivers excitation energy to photosystems II and I. The Prochlorales pcb genes are not related to higher plant LHCs. The sequence is that of Chlorophyll a/b light-harvesting protein PcbC (pcbC) from Prochlorothrix hollandica.